Here is a 165-residue protein sequence, read N- to C-terminus: UPF0303 protein Bcep18194_A4700 (165 aa).

It belongs to the UPF0303 family.

This chain is UPF0303 protein Bcep18194_A4700, found in Burkholderia lata (strain ATCC 17760 / DSM 23089 / LMG 22485 / NCIMB 9086 / R18194 / 383).